The following is a 62-amino-acid chain: Insect toxin BsIT4 (62 aa).

One can recognise an LCN-type CS-alpha/beta domain in the interval 1–62; sequence DGYIKGNKGC…WLYAATNTCG (62 aa). 4 disulfide bridges follow: cysteine 10–cysteine 61, cysteine 14–cysteine 35, cysteine 21–cysteine 42, and cysteine 25–cysteine 44.

The protein belongs to the long (4 C-C) scorpion toxin superfamily. Sodium channel inhibitor family. Beta subfamily. As to expression, expressed by the venom gland.

The protein localises to the secreted. Functionally, depressant insect beta-toxins cause a transient contraction paralysis followed by a slow flaccid paralysis. They bind voltage-independently at site-4 of sodium channels (Nav) and shift the voltage of activation toward more negative potentials thereby affecting sodium channel activation and promoting spontaneous and repetitive firing. This toxin is active only on insects. The chain is Insect toxin BsIT4 from Hottentotta tamulus sindicus (Scorpion).